The sequence spans 429 residues: MTVHVTGCSTATADQLVSREIRTESGQREVFCGLTGIVWLHRKIQDAFFLVVGSRTCAHLVQSAAGVMIFAEPRFGTAIMEEKDLAGLTDANDELDRVVTQLLARRPDIKLLFLVGSCPSEVIKLDLSRAALRLSQRFSPGVRILNYSGSGIETTFTQGEDACLASLVPELPAQTDTKPSLLVVGSLADVVEDQFARMFEALGVGNVAFFPPRKSTALPSVGPNTKILMAQPFLPDTVRALEERGAKRLAAPFPLGVEGTTGWLRAAADAFGVDPAKFEQVTAPNRARAERALSAFKSELGGRRIFFFPDSQLEIPLARFLSRELDMQLVEVATPYLHREHLAEELKLLPIEVALTEGQDVDDQLDRCRIARPDIVVCGLGLANPLEAEGITTKWSIELVFTPIQGYEQAADLAELFARPLVRRAKLVA.

Cys32, Cys57, and Cys118 together coordinate [4Fe-4S] cluster.

It belongs to the BchN/ChlN family. In terms of assembly, protochlorophyllide reductase is composed of three subunits; BchL, BchN and BchB. Forms a heterotetramer of two BchB and two BchN subunits. The cofactor is [4Fe-4S] cluster.

The catalysed reaction is chlorophyllide a + oxidized 2[4Fe-4S]-[ferredoxin] + 2 ADP + 2 phosphate = protochlorophyllide a + reduced 2[4Fe-4S]-[ferredoxin] + 2 ATP + 2 H2O. Its pathway is porphyrin-containing compound metabolism; bacteriochlorophyll biosynthesis (light-independent). Its function is as follows. Component of the dark-operative protochlorophyllide reductase (DPOR) that uses Mg-ATP and reduced ferredoxin to reduce ring D of protochlorophyllide (Pchlide) to form chlorophyllide a (Chlide). This reaction is light-independent. The NB-protein (BchN-BchB) is the catalytic component of the complex. The chain is Light-independent protochlorophyllide reductase subunit N from Rhodopseudomonas palustris (strain ATCC BAA-98 / CGA009).